A 404-amino-acid polypeptide reads, in one-letter code: Beta-ketoacyl-[acyl-carrier-protein] synthase III, chloroplastic (404 aa).

A chloroplast-targeting transit peptide spans 1 to 43 (MANASGFFTHPSIPNLRSRIHVPVRVSGSGFCVSNRFSKRVLC). Active-site residues include cysteine 179, histidine 330, and asparagine 360.

This sequence belongs to the thiolase-like superfamily. FabH family.

It localises to the plastid. The protein localises to the chloroplast. It catalyses the reaction malonyl-[ACP] + acetyl-CoA + H(+) = 3-oxobutanoyl-[ACP] + CO2 + CoA. It functions in the pathway lipid metabolism; fatty acid biosynthesis. Functionally, catalyzes the condensation reaction of fatty acid synthesis by the addition to an acyl acceptor of two carbons from malonyl-ACP. KAS III catalyzes the first condensation reaction which initiates fatty acid synthesis and may therefore play a role in governing the total rate of fatty acid production. Possesses both acetoacetyl-ACP synthase and acetyl transacylase activities. The protein is Beta-ketoacyl-[acyl-carrier-protein] synthase III, chloroplastic of Arabidopsis thaliana (Mouse-ear cress).